The sequence spans 92 residues: Small ribosomal subunit protein uS19 (92 aa).

The protein belongs to the universal ribosomal protein uS19 family.

Functionally, protein S19 forms a complex with S13 that binds strongly to the 16S ribosomal RNA. In Xanthobacter autotrophicus (strain ATCC BAA-1158 / Py2), this protein is Small ribosomal subunit protein uS19.